A 185-amino-acid chain; its full sequence is Peptidyl-tRNA hydrolase (185 aa).

TRNA is bound at residue tyrosine 15. The active-site Proton acceptor is histidine 20. Tyrosine 64, asparagine 66, and asparagine 112 together coordinate tRNA.

It belongs to the PTH family. Monomer.

It is found in the cytoplasm. The enzyme catalyses an N-acyl-L-alpha-aminoacyl-tRNA + H2O = an N-acyl-L-amino acid + a tRNA + H(+). In terms of biological role, hydrolyzes ribosome-free peptidyl-tRNAs (with 1 or more amino acids incorporated), which drop off the ribosome during protein synthesis, or as a result of ribosome stalling. Functionally, catalyzes the release of premature peptidyl moieties from peptidyl-tRNA molecules trapped in stalled 50S ribosomal subunits, and thus maintains levels of free tRNAs and 50S ribosomes. The polypeptide is Peptidyl-tRNA hydrolase (Porphyromonas gingivalis (strain ATCC BAA-308 / W83)).